The primary structure comprises 341 residues: MSEEIHLSVDAMGGDFGPRLCVEAAASFIAKHSNVRITLVGDKAAVSSCIPPQADLSRLHVLHADQVVDMADKPSHALRHKKNSSMWRALQLVADGEAQACVSGGNTGALMAIGCHLLKTIAGIDRPAIAKQIPTARGSSVLLDLGANLECSPQQLFQFGLMGQGLARVYGKSEPTVALLNVGSELTKGNDIIQDTAQLMGDCADMHFRGFVEGDSLYSGEVDVVVCDGFIGNVALKVSEGVAKFVFGDLRSRIGRGVRSRLLAWLAKPVLKPWAEQFRPAKYNGAALLGLKGVVIKSHGGADAEGFEQALYVALEQASAGIPLKIQASLAAMLGAGLETK.

It belongs to the PlsX family. As to quaternary structure, homodimer. Probably interacts with PlsY.

It is found in the cytoplasm. The catalysed reaction is a fatty acyl-[ACP] + phosphate = an acyl phosphate + holo-[ACP]. It participates in lipid metabolism; phospholipid metabolism. In terms of biological role, catalyzes the reversible formation of acyl-phosphate (acyl-PO(4)) from acyl-[acyl-carrier-protein] (acyl-ACP). This enzyme utilizes acyl-ACP as fatty acyl donor, but not acyl-CoA. The protein is Phosphate acyltransferase of Saccharophagus degradans (strain 2-40 / ATCC 43961 / DSM 17024).